The primary structure comprises 246 residues: Phosphomannomutase 2 (246 aa).

At Ala2 the chain carries N-acetylalanine. The active-site Nucleophile is Asp12. 2 residues coordinate Mg(2+): Asp12 and Asp14. Asp14 acts as the Proton donor/acceptor in catalysis. Alpha-D-mannose 1-phosphate contacts are provided by Arg21, Arg123, Arg134, Arg141, Ser179, and Asp181. 4 residues coordinate Mg(2+): Asp209, Phe221, Asp223, and Thr226.

It belongs to the eukaryotic PMM family. In terms of assembly, homodimer.

It is found in the cytoplasm. It catalyses the reaction alpha-D-mannose 1-phosphate = D-mannose 6-phosphate. It participates in nucleotide-sugar biosynthesis; GDP-alpha-D-mannose biosynthesis; alpha-D-mannose 1-phosphate from D-fructose 6-phosphate: step 2/2. Functionally, involved in the synthesis of the GDP-mannose and dolichol-phosphate-mannose required for a number of critical mannosyl transfer reactions. This is Phosphomannomutase 2 (PMM2) from Bos taurus (Bovine).